The chain runs to 434 residues: Adenylosuccinate synthetase (434 aa).

GTP is bound by residues 13–19 and 41–43; these read GDEGKGK and GHT. Asp-14 functions as the Proton acceptor in the catalytic mechanism. 2 residues coordinate Mg(2+): Asp-14 and Gly-41. Residues 14–17, 39–42, Thr-133, Arg-147, Gln-228, Thr-243, and Arg-307 contribute to the IMP site; these read DEGK and NAGH. The active-site Proton donor is His-42. 303–309 contributes to the substrate binding site; it reads STTGRKR. GTP is bound by residues Arg-309, 335 to 337, and 417 to 419; these read KID and STG.

It belongs to the adenylosuccinate synthetase family. As to quaternary structure, homodimer. The cofactor is Mg(2+).

The protein localises to the cytoplasm. It catalyses the reaction IMP + L-aspartate + GTP = N(6)-(1,2-dicarboxyethyl)-AMP + GDP + phosphate + 2 H(+). It participates in purine metabolism; AMP biosynthesis via de novo pathway; AMP from IMP: step 1/2. In terms of biological role, plays an important role in the de novo pathway of purine nucleotide biosynthesis. Catalyzes the first committed step in the biosynthesis of AMP from IMP. This Wigglesworthia glossinidia brevipalpis protein is Adenylosuccinate synthetase.